Reading from the N-terminus, the 84-residue chain is Toxin Tb1 (84 aa).

An N-terminal signal peptide occupies residues 1–20 (MKGMILFISCLLLIGIVVEC). Residues 21 to 82 (KEGYLMDHEG…VWDRATNKCG (62 aa)) enclose the LCN-type CS-alpha/beta domain. Cystine bridges form between C31-C81, C35-C57, C43-C62, and C47-C64. The residue at position 81 (C81) is a Cysteine amide.

This sequence belongs to the long (4 C-C) scorpion toxin superfamily. Sodium channel inhibitor family. Beta subfamily. Expressed by the venom gland.

The protein localises to the secreted. In terms of biological role, beta toxins bind voltage-independently at site-4 of sodium channels (Nav) and shift the voltage of activation toward more negative potentials thereby affecting sodium channel activation and promoting spontaneous and repetitive firing. Is lethal to mice. This is Toxin Tb1 from Tityus bahiensis (Brazilian scorpion).